Consider the following 412-residue polypeptide: Transforming growth factor beta-2 proprotein (412 aa).

A signal peptide spans 1–20 (MHCYLLSVFLTLDLAAVALS). N-linked (GlcNAc...) asparagine glycosylation is found at Asn-72, Asn-139, and Asn-240. Cystine bridges form between Cys-307/Cys-316, Cys-315/Cys-378, Cys-344/Cys-409, and Cys-348/Cys-411.

The protein belongs to the TGF-beta family. As to quaternary structure, interacts with Transforming growth factor beta-2 (TGF-beta-2) chain; interaction is non-covalent and maintains (TGF-beta-2) in a latent state. Homodimer; disulfide-linked. Interacts with TGF-beta receptors (TGFBR1 and TGFBR2), leading to signal transduction. Post-translationally, the precursor proprotein is cleaved in the Golgi apparatus to form Transforming growth factor beta-2 (TGF-beta-2) and Latency-associated peptide (LAP) chains, which remain non-covalently linked, rendering TGF-beta-2 inactive.

Its subcellular location is the secreted. It is found in the extracellular space. It localises to the extracellular matrix. Precursor of the Latency-associated peptide (LAP) and Transforming growth factor beta-2 (TGF-beta-2) chains, which constitute the regulatory and active subunit of TGF-beta-2, respectively. Its function is as follows. Required to maintain the Transforming growth factor beta-2 (TGF-beta-2) chain in a latent state during storage in extracellular matrix. Associates non-covalently with TGF-beta-2 and regulates its activation via interaction with 'milieu molecules', such as LTBP1 and LRRC32/GARP, that control activation of TGF-beta-2. Functionally, multifunctional protein that regulates various processes such as angiogenesis and heart development. Activation into mature form follows different steps: following cleavage of the proprotein in the Golgi apparatus, Latency-associated peptide (LAP) and Transforming growth factor beta-2 (TGF-beta-2) chains remain non-covalently linked rendering TGF-beta-2 inactive during storage in extracellular matrix. At the same time, LAP chain interacts with 'milieu molecules', such as LTBP1 and LRRC32/GARP, that control activation of TGF-beta-2 and maintain it in a latent state during storage in extracellular milieus. Once activated following release of LAP, TGF-beta-2 acts by binding to TGF-beta receptors (TGFBR1 and TGFBR2), which transduce signal. This chain is Transforming growth factor beta-2 proprotein (TGFB2), found in Gallus gallus (Chicken).